Reading from the N-terminus, the 127-residue chain is Small ribosomal subunit protein uS13 (127 aa).

Residues 95-127 form a disordered region; the sequence is GLPLRGQRTKTNARTRRGKKGAAIGGKKKATKK.

This sequence belongs to the universal ribosomal protein uS13 family. Part of the 30S ribosomal subunit. Forms a loose heterodimer with protein S19. Forms two bridges to the 50S subunit in the 70S ribosome.

Its function is as follows. Located at the top of the head of the 30S subunit, it contacts several helices of the 16S rRNA. In the 70S ribosome it contacts the 23S rRNA (bridge B1a) and protein L5 of the 50S subunit (bridge B1b), connecting the 2 subunits; these bridges are implicated in subunit movement. Contacts the tRNAs in the A and P-sites. The protein is Small ribosomal subunit protein uS13 of Herpetosiphon aurantiacus (strain ATCC 23779 / DSM 785 / 114-95).